A 31-amino-acid chain; its full sequence is Cyclotide vico-B (31 aa).

Positions 1–31 form a cross-link, cyclopeptide (Gly-Asn); it reads GSIPCAESCVYIPCITGIAGCSCKNKVCYYN. 3 disulfide bridges follow: C5–C21, C9–C23, and C14–C28.

The protein belongs to the cyclotide family. Bracelet subfamily. This is a cyclic peptide.

Functionally, probably participates in a plant defense mechanism. In Viola cotyledon (Violeta), this protein is Cyclotide vico-B.